The chain runs to 246 residues: Adenylate kinase 4 (246 aa).

The residue at position 2 (Ala-2) is an N-acetylalanine. 43–48 is a binding site for ATP; that stretch reads GSGKGT. The NMP stretch occupies residues 63–92; that stretch reads STGDMLRAAVASKTPLGVKAKEAMEKGELV. AMP is bound by residues Thr-64, Arg-69, 90 to 92, 118 to 121, and Gln-125; these read ELV and GFPR. The interval 159–196 is LID; it reads GRWIHPSSGRSYHTKFAPPKTPGVDDITGEPLIQRKDD. Position 160 (Arg-160) interacts with ATP. Residues Arg-193 and Arg-204 each contribute to the AMP site.

Belongs to the adenylate kinase family. In terms of assembly, monomer.

Its subcellular location is the cytoplasm. The enzyme catalyses AMP + ATP = 2 ADP. In terms of biological role, catalyzes the reversible transfer of the terminal phosphate group between ATP and AMP. Plays an important role in cellular energy homeostasis and in adenine nucleotide metabolism. This Arabidopsis thaliana (Mouse-ear cress) protein is Adenylate kinase 4 (ADK1).